The chain runs to 229 residues: Trypsin (229 aa).

A propeptide spans Ala-1–Lys-7 (activation peptide). The 220-residue stretch at Ile-8 to Ala-227 folds into the Peptidase S1 domain. 6 disulfide bridges follow: Cys-14/Cys-143, Cys-32/Cys-48, Cys-116/Cys-216, Cys-123/Cys-189, Cys-154/Cys-168, and Cys-179/Cys-203. The active-site Charge relay system is the His-47. Residues Glu-59 and Glu-69 each coordinate Ca(2+). The Charge relay system role is filled by Asp-91. Ser-183 (charge relay system) is an active-site residue.

Belongs to the peptidase S1 family. Requires Ca(2+) as cofactor.

It localises to the secreted. Its subcellular location is the extracellular space. It catalyses the reaction Preferential cleavage: Arg-|-Xaa, Lys-|-Xaa.. This is Trypsin from Squalus acanthias (Spiny dogfish).